Reading from the N-terminus, the 945-residue chain is UvrABC system protein A (945 aa).

Residue 31–38 (GLSGSGKS) participates in ATP binding. A C4-type zinc finger spans residues 254–281 (CPVCGHSISELEPKLFSFNNPAGACPTC). 2 consecutive ABC transporter domains span residues 310–587 (WDRR…PDSL) and 607–937 (RDKK…HFLK). 640–647 (GVSGSGKS) is an ATP binding site. The C4-type zinc-finger motif lies at 740–766 (CEACQGDGVIKVEMHFLPDIYVPCDVC).

It belongs to the ABC transporter superfamily. UvrA family. In terms of assembly, forms a heterotetramer with UvrB during the search for lesions.

The protein resides in the cytoplasm. In terms of biological role, the UvrABC repair system catalyzes the recognition and processing of DNA lesions. UvrA is an ATPase and a DNA-binding protein. A damage recognition complex composed of 2 UvrA and 2 UvrB subunits scans DNA for abnormalities. When the presence of a lesion has been verified by UvrB, the UvrA molecules dissociate. The chain is UvrABC system protein A from Pseudomonas aeruginosa (strain ATCC 15692 / DSM 22644 / CIP 104116 / JCM 14847 / LMG 12228 / 1C / PRS 101 / PAO1).